The chain runs to 444 residues: Glutamyl-tRNA reductase (444 aa).

Substrate is bound by residues 49–52 (TCNR), serine 117, 122–124 (EPQ), and glutamine 128. The active-site Nucleophile is the cysteine 50. 202–207 (GAGETI) serves as a coordination point for NADP(+).

It belongs to the glutamyl-tRNA reductase family. In terms of assembly, homodimer.

It carries out the reaction (S)-4-amino-5-oxopentanoate + tRNA(Glu) + NADP(+) = L-glutamyl-tRNA(Glu) + NADPH + H(+). The protein operates within porphyrin-containing compound metabolism; protoporphyrin-IX biosynthesis; 5-aminolevulinate from L-glutamyl-tRNA(Glu): step 1/2. In terms of biological role, catalyzes the NADPH-dependent reduction of glutamyl-tRNA(Glu) to glutamate 1-semialdehyde (GSA). The chain is Glutamyl-tRNA reductase from Mannheimia succiniciproducens (strain KCTC 0769BP / MBEL55E).